The chain runs to 336 residues: Holliday junction branch migration complex subunit RuvB (336 aa).

A large ATPase domain (RuvB-L) region spans residues 1–182; it reads MKERIVNLET…FGMSFRMQFY (182 aa). Residues L21, R22, G63, K66, T67, S68, 129–131, R172, Y182, and R219 each bind ATP; that span reads EDF. T67 is a Mg(2+) binding site. Residues 183–253 form a small ATPAse domain (RuvB-S) region; that stretch reads SPSELALIIK…ITLHALNELG (71 aa). The tract at residues 256-336 is head domain (RuvB-H); sequence ELGFDEADLA…IPTLKSQSLF (81 aa). R310 and R315 together coordinate DNA.

Belongs to the RuvB family. In terms of assembly, homohexamer. Forms an RuvA(8)-RuvB(12)-Holliday junction (HJ) complex. HJ DNA is sandwiched between 2 RuvA tetramers; dsDNA enters through RuvA and exits via RuvB. An RuvB hexamer assembles on each DNA strand where it exits the tetramer. Each RuvB hexamer is contacted by two RuvA subunits (via domain III) on 2 adjacent RuvB subunits; this complex drives branch migration. In the full resolvosome a probable DNA-RuvA(4)-RuvB(12)-RuvC(2) complex forms which resolves the HJ.

Its subcellular location is the cytoplasm. The enzyme catalyses ATP + H2O = ADP + phosphate + H(+). Functionally, the RuvA-RuvB-RuvC complex processes Holliday junction (HJ) DNA during genetic recombination and DNA repair, while the RuvA-RuvB complex plays an important role in the rescue of blocked DNA replication forks via replication fork reversal (RFR). RuvA specifically binds to HJ cruciform DNA, conferring on it an open structure. The RuvB hexamer acts as an ATP-dependent pump, pulling dsDNA into and through the RuvAB complex. RuvB forms 2 homohexamers on either side of HJ DNA bound by 1 or 2 RuvA tetramers; 4 subunits per hexamer contact DNA at a time. Coordinated motions by a converter formed by DNA-disengaged RuvB subunits stimulates ATP hydrolysis and nucleotide exchange. Immobilization of the converter enables RuvB to convert the ATP-contained energy into a lever motion, pulling 2 nucleotides of DNA out of the RuvA tetramer per ATP hydrolyzed, thus driving DNA branch migration. The RuvB motors rotate together with the DNA substrate, which together with the progressing nucleotide cycle form the mechanistic basis for DNA recombination by continuous HJ branch migration. Branch migration allows RuvC to scan DNA until it finds its consensus sequence, where it cleaves and resolves cruciform DNA. This Helicobacter acinonychis (strain Sheeba) protein is Holliday junction branch migration complex subunit RuvB.